A 165-amino-acid chain; its full sequence is Glutamyl-tRNA(Gln) amidotransferase subunit F, mitochondrial (165 aa).

A compositionally biased stretch (basic and acidic residues) spans 137 to 153; it reads VSDQRGERGFDTSELRT. The interval 137–165 is disordered; sequence VSDQRGERGFDTSELRTRINRAKSTAEKE.

This sequence belongs to the GatF family. In terms of assembly, subunit of the heterotrimeric GatFAB amidotransferase (AdT) complex, composed of A, B and F subunits.

The protein localises to the mitochondrion inner membrane. The enzyme catalyses L-glutamyl-tRNA(Gln) + L-glutamine + ATP + H2O = L-glutaminyl-tRNA(Gln) + L-glutamate + ADP + phosphate + H(+). In terms of biological role, allows the formation of correctly charged Gln-tRNA(Gln) through the transamidation of misacylated Glu-tRNA(Gln) in the mitochondria. The reaction takes place in the presence of glutamine and ATP through an activated gamma-phospho-Glu-tRNA(Gln). Required for proper protein synthesis within the mitochondrion. The sequence is that of Glutamyl-tRNA(Gln) amidotransferase subunit F, mitochondrial from Clavispora lusitaniae (strain ATCC 42720) (Yeast).